Reading from the N-terminus, the 248-residue chain is MWLGVITLFPEMFRAVTDFGVTGRAVKNGLLELHTWNPRDFTHDRHSTVDDRPYGGGPGMLMMVQPLRDAIHAAKAAAGEEAKVIYLSPQGRKLDQQGVTELAESSRLILVCGRYEGIDERIIQTEVDEEWSVGDYVLSGGELPAMTLIDAVSRLVPGVLGKQASAEQDSFSDGLLDCPHYTRPESLDGLDVPAVLLSGNHEQIRLWRLQQSLGRTFLRRPELFENLALTDEQSTLLAQFVEAMDKNA.

S-adenosyl-L-methionine contacts are provided by residues G113 and 133 to 138; that span reads VGDYVL.

The protein belongs to the RNA methyltransferase TrmD family. As to quaternary structure, homodimer.

The protein localises to the cytoplasm. The catalysed reaction is guanosine(37) in tRNA + S-adenosyl-L-methionine = N(1)-methylguanosine(37) in tRNA + S-adenosyl-L-homocysteine + H(+). Functionally, specifically methylates guanosine-37 in various tRNAs. The polypeptide is tRNA (guanine-N(1)-)-methyltransferase (Shewanella sp. (strain ANA-3)).